A 59-amino-acid chain; its full sequence is Large ribosomal subunit protein bL32 (59 aa).

Disordered regions lie at residues 1–23 (MAVQ…DFLT) and 35–59 (EVHL…TKND). A compositionally biased stretch (basic residues) spans 49–59 (RGKKVVKTKND).

Belongs to the bacterial ribosomal protein bL32 family.

The polypeptide is Large ribosomal subunit protein bL32 (Burkholderia ambifaria (strain MC40-6)).